The sequence spans 151 residues: D-aminoacyl-tRNA deacylase (151 aa).

Positions 136–137 match the Gly-cisPro motif, important for rejection of L-amino acids motif; it reads GP.

Belongs to the DTD family. In terms of assembly, homodimer.

Its subcellular location is the cytoplasm. It carries out the reaction glycyl-tRNA(Ala) + H2O = tRNA(Ala) + glycine + H(+). The enzyme catalyses a D-aminoacyl-tRNA + H2O = a tRNA + a D-alpha-amino acid + H(+). An aminoacyl-tRNA editing enzyme that deacylates mischarged D-aminoacyl-tRNAs. Also deacylates mischarged glycyl-tRNA(Ala), protecting cells against glycine mischarging by AlaRS. Acts via tRNA-based rather than protein-based catalysis; rejects L-amino acids rather than detecting D-amino acids in the active site. By recycling D-aminoacyl-tRNA to D-amino acids and free tRNA molecules, this enzyme counteracts the toxicity associated with the formation of D-aminoacyl-tRNA entities in vivo and helps enforce protein L-homochirality. The protein is D-aminoacyl-tRNA deacylase of Lactococcus lactis subsp. lactis (strain IL1403) (Streptococcus lactis).